A 121-amino-acid polypeptide reads, in one-letter code: Flagellar hook-basal body complex protein FliE (121 aa).

This sequence belongs to the FliE family.

Its subcellular location is the bacterial flagellum basal body. In Saccharophagus degradans (strain 2-40 / ATCC 43961 / DSM 17024), this protein is Flagellar hook-basal body complex protein FliE.